A 646-amino-acid polypeptide reads, in one-letter code: Calcium-dependent protein kinase 2 (646 aa).

G2 carries the N-myristoyl glycine lipid modification. Residue C5 is the site of S-palmitoyl cysteine attachment. The segment at 27-169 (RIGAEQASSS…HMRRVSSAGL (143 aa)) is disordered. Residues 32–43 (QASSSSHGNGQV) are compositionally biased toward polar residues. Basic and acidic residues-rich tracts occupy residues 73–119 (PETK…KREV) and 126–157 (AKPE…EPQK). One can recognise a Protein kinase domain in the interval 186–444 (YSLGRKLGQG…AHQVLCHPWV (259 aa)). Residues 192–200 (LGQGQFGTT) and K215 each bind ATP. D310 serves as the catalytic Proton acceptor. S350 carries the phosphoserine modification. The tract at residues 450 to 480 (APDKPLDSAVLSRMKQFSAMNKFKKMALRVI) is autoinhibitory domain. 4 consecutive EF-hand domains span residues 487-522 (EEIA…VGAN), 523-558 (LKES…LNKI), 559-592 (ERED…EEFG), and 593-628 (VEDA…GSIM). Positions 500, 502, 504, 506, 511, 536, 538, 540, 542, 547, 572, 574, 576, 583, 606, 608, 610, 612, and 617 each coordinate Ca(2+).

This sequence belongs to the protein kinase superfamily. Ser/Thr protein kinase family. CDPK subfamily. In terms of assembly, interacts with 14-3-3 proteins.

Its subcellular location is the endoplasmic reticulum membrane. The enzyme catalyses L-seryl-[protein] + ATP = O-phospho-L-seryl-[protein] + ADP + H(+). The catalysed reaction is L-threonyl-[protein] + ATP = O-phospho-L-threonyl-[protein] + ADP + H(+). With respect to regulation, activated by calcium. Autophosphorylation may play an important role in the regulation of the kinase activity. May play a role in signal transduction pathways that involve calcium as a second messenger. This is Calcium-dependent protein kinase 2 (CPK2) from Arabidopsis thaliana (Mouse-ear cress).